We begin with the raw amino-acid sequence, 51 residues long: Large ribosomal subunit protein eL39 (51 aa).

The segment at 32–51 (KGSVKQHPKMRHWRRKNLKK) is disordered. Basic residues predominate over residues 33–51 (GSVKQHPKMRHWRRKNLKK).

The protein belongs to the eukaryotic ribosomal protein eL39 family.

This Methanococcus maripaludis (strain C5 / ATCC BAA-1333) protein is Large ribosomal subunit protein eL39.